A 320-amino-acid polypeptide reads, in one-letter code: Transaldolase (320 aa).

Residue lysine 126 is the Schiff-base intermediate with substrate of the active site.

The protein belongs to the transaldolase family. Type 1 subfamily. Homodimer.

It localises to the cytoplasm. The catalysed reaction is D-sedoheptulose 7-phosphate + D-glyceraldehyde 3-phosphate = D-erythrose 4-phosphate + beta-D-fructose 6-phosphate. Its pathway is carbohydrate degradation; pentose phosphate pathway; D-glyceraldehyde 3-phosphate and beta-D-fructose 6-phosphate from D-ribose 5-phosphate and D-xylulose 5-phosphate (non-oxidative stage): step 2/3. Functionally, transaldolase is important for the balance of metabolites in the pentose-phosphate pathway. The polypeptide is Transaldolase (Bordetella bronchiseptica (strain ATCC BAA-588 / NCTC 13252 / RB50) (Alcaligenes bronchisepticus)).